The primary structure comprises 295 residues: sn-glycerol-3-phosphate transport system permease protein UgpA (295 aa).

At 1 to 11 (MSSSRPVFRSR) the chain is on the cytoplasmic side. A helical membrane pass occupies residues 12–32 (WLPYLLVAPQLIITVIFFIWP). Topologically, residues 33 to 80 (AGEALWYSLQSVDPFGFSSQFVGLDNFVTLFHDSYYLDAFWTTIKFST) are periplasmic. The ABC transmembrane type-1 domain occupies 76 to 284 (IKFSTFVTVS…FLVIVLTVVQ (209 aa)). A helical membrane pass occupies residues 81–101 (FVTVSGLLVSLFFAALVEYIV). The Cytoplasmic portion of the chain corresponds to 102–109 (RGSRFYQT). A helical transmembrane segment spans residues 110–130 (LMLLPYAVAPAVAAVLWIFLF). Residues 131 to 156 (NPGRGLITHFLAEFGYDWNHAQNSGQ) are Periplasmic-facing. Residues 157–177 (AMFLVVFASVWKQISYNFLFF) form a helical membrane-spanning segment. At 178–207 (YAALQSIPRSLIEAAAIDGAGPIRRFFKIA) the chain is on the cytoplasmic side. A helical membrane pass occupies residues 208–228 (LPLIAPVSFFLLVVNLVYAFF). Residues 229-262 (DTFPVIDAATSGGPVQATTTLIYKIYREGFTGLD) lie on the Periplasmic side of the membrane. Residues 263 to 283 (LASSAAQSVVLMFLVIVLTVV) traverse the membrane as a helical segment. Over 284-295 (QFRYVESKVRYQ) the chain is Cytoplasmic.

It belongs to the binding-protein-dependent transport system permease family. UgpAE subfamily. As to quaternary structure, the complex is composed of two ATP-binding proteins (UgpC), two transmembrane proteins (UgpA and UgpE) and a solute-binding protein (UgpB).

It localises to the cell inner membrane. Functionally, part of the ABC transporter complex UgpBAEC involved in sn-glycerol-3-phosphate (G3P) import. Probably responsible for the translocation of the substrate across the membrane. The protein is sn-glycerol-3-phosphate transport system permease protein UgpA (ugpA) of Escherichia coli (strain UTI89 / UPEC).